The sequence spans 510 residues: Insulinoma-associated protein 1 (510 aa).

Over residues methionine 1–lysine 12 the composition is skewed to basic residues. The segment at methionine 1 to valine 20 is SNAG domain. 2 disordered regions span residues methionine 1–histidine 110 and glycine 176–isoleucine 226. Residues proline 2 to valine 7 form a required and sufficient for interaction with KDM1A region. The tract at residues proline 43–proline 58 is necessary for interaction with CCND1. Positions proline 43–alanine 59 are enriched in pro residues. Composition is skewed to low complexity over residues alanine 64–proline 74 and glutamate 209–proline 218. The segment at phenylalanine 267–cysteine 287 adopts a C2H2-type 1; atypical zinc-finger fold. Residues tyrosine 295 to histidine 317 form a C2H2-type 2 zinc finger. The tract at residues arginine 315–serine 362 is disordered. Over residues proline 329 to threonine 351 the composition is skewed to basic and acidic residues. 3 C2H2-type zinc fingers span residues tyrosine 367–histidine 389, histidine 441–histidine 464, and phenylalanine 469–histidine 492.

It belongs to the INSM1 family. Interacts (via the SNAG domain) with HDAC1. Interacts (via the SNAG domain) with HDAC2. Interacts (via the SNAG domain) with KDM1A. Interacts (via the SNAG domain) with RCOR1. Interacts with SORBS1. Interacts (via the N-terminal region) with CCND1 (via cyclin N-terminal domain); the interaction competes with the binding of CCND1 to CDK4 during cell cycle progression and increases its transcriptional repressor activity. Interacts with HDAC3; the interaction increases its transcriptional repressor activity. As to expression, expressed in pancreatic duct cells. Expressed in several tumor cell lines of neuroendocrine origin including pheochromocytoma, medullary thyroid carcinoma, insulinoma, medulloblastoma, retinoblastoma, pheochromacytoma, medullary thyroid carcinoma and small cell lung carcinoma.

It is found in the nucleus. Sequence-specific DNA-binding transcriptional regulator that plays a key role in neurogenesis and neuroendocrine cell differentiation during embryonic and/or fetal development. Binds to the consensus sequence 5'-[TG][TC][TC][TT][GA]GGG[CG]A-3' in target promoters. Acts as a transcriptional repressor of NEUROD1 and INS expression via its interaction with cyclin CCND1 in a cell cycle-independent manner. Negatively regulates skeletal muscle-specific gene expression in endocrine cells of the pituitary by inhibiting the Notch signaling pathway. Represses target gene transcription by recruiting chromatin-modifying factors, such as HDAC1, HDAC2, HDAC3, KDM1A and RCOR1 histone deacetylases. Binds to its own promoter, suggesting autoregulation as a self-control feedback mechanism. Competes with histone H3 for the same binding site on the histone demethylase complex formed by KDM1A and RCOR1, and thereby inhibits demethylation of histone H3 at 'Lys-4'. Promotes the generation and expansion of neuronal basal progenitor cells in the developing neocortex. Involved in the differentiation of endocrine cells of the developing anterior pituitary gland, of the pancreas and intestine, and of sympatho-adrenal cells in the peripheral nervous system. Promotes cell cycle signaling arrest and inhibition of cellular proliferation. This chain is Insulinoma-associated protein 1 (INSM1), found in Homo sapiens (Human).